The sequence spans 309 residues: Protein FdhE (309 aa).

It belongs to the FdhE family.

It localises to the cytoplasm. In terms of biological role, necessary for formate dehydrogenase activity. In Escherichia coli O139:H28 (strain E24377A / ETEC), this protein is Protein FdhE.